The primary structure comprises 189 residues: Elongation factor P (189 aa).

The protein belongs to the elongation factor P family.

Its subcellular location is the cytoplasm. The protein operates within protein biosynthesis; polypeptide chain elongation. In terms of biological role, involved in peptide bond synthesis. Stimulates efficient translation and peptide-bond synthesis on native or reconstituted 70S ribosomes in vitro. Probably functions indirectly by altering the affinity of the ribosome for aminoacyl-tRNA, thus increasing their reactivity as acceptors for peptidyl transferase. The polypeptide is Elongation factor P (Campylobacter lari (strain RM2100 / D67 / ATCC BAA-1060)).